The chain runs to 588 residues: NADP-dependent malic enzyme 3 (588 aa).

Gly-2 carries the N-acetylglycine modification. Tyr-136 serves as the catalytic Proton donor. Arg-189 contacts NADP(+). The active-site Proton acceptor is Lys-207. A divalent metal cation contacts are provided by Glu-279, Asp-280, and Asp-303. NADP(+) contacts are provided by residues Asp-303, 332–348 (LFLG…ELIA), and Asn-444.

This sequence belongs to the malic enzymes family. Homohexamers and homooctamers. Requires Mg(2+) as cofactor. It depends on Mn(2+) as a cofactor. In terms of tissue distribution, mostly expressed in flowers, and, to a lower extent, in stems. In leaves and stems, restricted to the trichomes and trichome basal cells. Also present in the stipules flanking the base of the inflorescence bract leaves and in the meristematic zone of developing lateral roots. In flowers, present in pollen and the abscission zone of developing siliques.

It is found in the cytoplasm. It catalyses the reaction (S)-malate + NADP(+) = pyruvate + CO2 + NADPH. The enzyme catalyses oxaloacetate + H(+) = pyruvate + CO2. Its activity is regulated as follows. Slightly activated by succinate and aspartate. Repressed by fumarate, malate, oxaloacetate and glucose. This chain is NADP-dependent malic enzyme 3 (NADP-ME3), found in Arabidopsis thaliana (Mouse-ear cress).